A 379-amino-acid chain; its full sequence is UDP-4-amino-4-deoxy-L-arabinose--oxoglutarate aminotransferase (379 aa).

Lysine 182 is modified (N6-(pyridoxal phosphate)lysine).

Belongs to the DegT/DnrJ/EryC1 family. ArnB subfamily. As to quaternary structure, homodimer. The cofactor is pyridoxal 5'-phosphate.

It carries out the reaction UDP-4-amino-4-deoxy-beta-L-arabinose + 2-oxoglutarate = UDP-beta-L-threo-pentopyranos-4-ulose + L-glutamate. It participates in nucleotide-sugar biosynthesis; UDP-4-deoxy-4-formamido-beta-L-arabinose biosynthesis; UDP-4-deoxy-4-formamido-beta-L-arabinose from UDP-alpha-D-glucuronate: step 2/3. The protein operates within bacterial outer membrane biogenesis; lipopolysaccharide biosynthesis. Functionally, catalyzes the conversion of UDP-4-keto-arabinose (UDP-Ara4O) to UDP-4-amino-4-deoxy-L-arabinose (UDP-L-Ara4N). The modified arabinose is attached to lipid A and is required for resistance to polymyxin and cationic antimicrobial peptides. This chain is UDP-4-amino-4-deoxy-L-arabinose--oxoglutarate aminotransferase, found in Escherichia coli O1:K1 / APEC.